The sequence spans 175 residues: VQ motif-containing protein 25 (175 aa).

The VQ motif lies at F50–G59.

The protein resides in the nucleus. In terms of biological role, may function as negative regulator of plant defense. The chain is VQ motif-containing protein 25 from Arabidopsis thaliana (Mouse-ear cress).